The sequence spans 84 residues: MELSQYLNYAFSLAYYIIIHLLCLSYIYEIIHKHKNVFVRPSKLEDALPLYKTGKNTNKEGDLRLISFIPLLLKSVKHSIRVYT.

A helical membrane pass occupies residues 10–32 (AFSLAYYIIIHLLCLSYIYEIIH).

It localises to the membrane. This is an uncharacterized protein from Saccharomyces cerevisiae (strain ATCC 204508 / S288c) (Baker's yeast).